Here is a 186-residue protein sequence, read N- to C-terminus: Elongation factor P (186 aa).

This sequence belongs to the elongation factor P family.

The protein localises to the cytoplasm. It functions in the pathway protein biosynthesis; polypeptide chain elongation. Its function is as follows. Involved in peptide bond synthesis. Stimulates efficient translation and peptide-bond synthesis on native or reconstituted 70S ribosomes in vitro. Probably functions indirectly by altering the affinity of the ribosome for aminoacyl-tRNA, thus increasing their reactivity as acceptors for peptidyl transferase. This Streptococcus agalactiae serotype Ia (strain ATCC 27591 / A909 / CDC SS700) protein is Elongation factor P.